The following is a 221-amino-acid chain: Molybdenum cofactor guanylyltransferase (221 aa).

GTP-binding positions include 18 to 20 (IAG), Lys35, Asn63, Asp81, and Asp112. Residue Asp112 coordinates Mg(2+).

Belongs to the MobA family. In terms of assembly, monomer. Requires Mg(2+) as cofactor.

The protein resides in the cytoplasm. The catalysed reaction is Mo-molybdopterin + GTP + H(+) = Mo-molybdopterin guanine dinucleotide + diphosphate. Transfers a GMP moiety from GTP to Mo-molybdopterin (Mo-MPT) cofactor (Moco or molybdenum cofactor) to form Mo-molybdopterin guanine dinucleotide (Mo-MGD) cofactor. In Brucella melitensis biotype 2 (strain ATCC 23457), this protein is Molybdenum cofactor guanylyltransferase.